The chain runs to 242 residues: Large ribosomal subunit protein uL1 (242 aa).

The protein belongs to the universal ribosomal protein uL1 family. As to quaternary structure, part of the 50S ribosomal subunit.

Functionally, binds directly to 23S rRNA. The L1 stalk is quite mobile in the ribosome, and is involved in E site tRNA release. Protein L1 is also a translational repressor protein, it controls the translation of the L11 operon by binding to its mRNA. The protein is Large ribosomal subunit protein uL1 of Streptomyces virginiae (Streptomyces cinnamonensis).